The primary structure comprises 375 residues: tRNA/tmRNA (uracil-C(5))-methyltransferase (375 aa).

The S-adenosyl-L-methionine site is built by Gln197, Tyr225, Asn230, Glu246, and Asp306. The active-site Nucleophile is Cys331. Residue Glu365 is the Proton acceptor of the active site.

This sequence belongs to the class I-like SAM-binding methyltransferase superfamily. RNA M5U methyltransferase family. TrmA subfamily.

The catalysed reaction is uridine(54) in tRNA + S-adenosyl-L-methionine = 5-methyluridine(54) in tRNA + S-adenosyl-L-homocysteine + H(+). It catalyses the reaction uridine(341) in tmRNA + S-adenosyl-L-methionine = 5-methyluridine(341) in tmRNA + S-adenosyl-L-homocysteine + H(+). Its function is as follows. Dual-specificity methyltransferase that catalyzes the formation of 5-methyluridine at position 54 (m5U54) in all tRNAs, and that of position 341 (m5U341) in tmRNA (transfer-mRNA). This Aliarcobacter butzleri (strain RM4018) (Arcobacter butzleri) protein is tRNA/tmRNA (uracil-C(5))-methyltransferase.